The primary structure comprises 678 residues: Nucleolar protein 9 (678 aa).

The span at 1–15 (MPRDKQKRGRRAEAK) shows a compositional bias: basic residues. Residues 1 to 24 (MPRDKQKRGRRAEAKRKRDDVITD) form a disordered region. Pumilio repeat units follow at residues 108–143 (EANGKELKIACSQSCSRLMEKLISASTVSQIKRLFS), 291–334 (GLDN…SLLR), and 382–419 (KILVRERIGSFSRNEIAGHVVVRILERLSKDDLKSAMD). The tract at residues 477-496 (QRSNQESDGTTSSSNTSSPE) is disordered. 2 Pumilio repeats span residues 524-562 (AVTTETLISIAQDPVVSHVLQDALTLPTSTPQFRRQITS) and 563-600 (RFSGKIAELALHSSGSHVVDALWPATKDLLFVKQRFAE).

It localises to the nucleus. Its subcellular location is the nucleolus. In terms of biological role, RNA-binding nucleolar protein required for pre-rRNA processing. Involved in production of 18S rRNA and assembly of small ribosomal subunit. This is Nucleolar protein 9 (NOP9) from Paracoccidioides brasiliensis (strain Pb18).